The sequence spans 408 residues: Dual-specificity RNA methyltransferase RlmN (408 aa).

Residue E120 is the Proton acceptor of the active site. Positions 126-375 (EEGRGTLCIS…IRTPRGRDIL (250 aa)) constitute a Radical SAM core domain. Cysteines 133 and 378 form a disulfide. Residues C140, C144, and C147 each coordinate [4Fe-4S] cluster. Residues 204 to 205 (GE), S236, 258 to 260 (SLH), and N335 contribute to the S-adenosyl-L-methionine site. C378 (S-methylcysteine intermediate) is an active-site residue.

The protein belongs to the radical SAM superfamily. RlmN family. Requires [4Fe-4S] cluster as cofactor.

Its subcellular location is the cytoplasm. It catalyses the reaction adenosine(2503) in 23S rRNA + 2 reduced [2Fe-2S]-[ferredoxin] + 2 S-adenosyl-L-methionine = 2-methyladenosine(2503) in 23S rRNA + 5'-deoxyadenosine + L-methionine + 2 oxidized [2Fe-2S]-[ferredoxin] + S-adenosyl-L-homocysteine. The enzyme catalyses adenosine(37) in tRNA + 2 reduced [2Fe-2S]-[ferredoxin] + 2 S-adenosyl-L-methionine = 2-methyladenosine(37) in tRNA + 5'-deoxyadenosine + L-methionine + 2 oxidized [2Fe-2S]-[ferredoxin] + S-adenosyl-L-homocysteine. Its function is as follows. Specifically methylates position 2 of adenine 2503 in 23S rRNA and position 2 of adenine 37 in tRNAs. m2A2503 modification seems to play a crucial role in the proofreading step occurring at the peptidyl transferase center and thus would serve to optimize ribosomal fidelity. The chain is Dual-specificity RNA methyltransferase RlmN from Rhizobium johnstonii (strain DSM 114642 / LMG 32736 / 3841) (Rhizobium leguminosarum bv. viciae).